A 239-amino-acid polypeptide reads, in one-letter code: Probable transcriptional regulatory protein ACL_0044 (239 aa).

This sequence belongs to the TACO1 family.

It localises to the cytoplasm. In Acholeplasma laidlawii (strain PG-8A), this protein is Probable transcriptional regulatory protein ACL_0044.